The chain runs to 567 residues: Monodechloroaminopyrrolnitrin halogenase PrnC (567 aa).

Its pathway is antibiotic biosynthesis. Functionally, involved in the biosynthesis of the antifungal antibiotic pyrrolnitrin. Catalyzes the chlorination of monodechloroaminopyrrolnitrin (MDA) at the 3 position to form aminopyrrolnitrin (APRN). The protein is Monodechloroaminopyrrolnitrin halogenase PrnC (prnC) of Pseudomonas fluorescens.